We begin with the raw amino-acid sequence, 283 residues long: Pantothenate synthetase (283 aa).

30-37 (MGNLHDGH) contributes to the ATP binding site. The active-site Proton donor is the histidine 37. Glutamine 61 is a (R)-pantoate binding site. Residue glutamine 61 coordinates beta-alanine. Residue 149 to 152 (GEKD) coordinates ATP. (R)-pantoate is bound at residue glutamine 155. 186 to 189 (LSSR) contacts ATP.

The protein belongs to the pantothenate synthetase family. In terms of assembly, homodimer.

Its subcellular location is the cytoplasm. The catalysed reaction is (R)-pantoate + beta-alanine + ATP = (R)-pantothenate + AMP + diphosphate + H(+). It participates in cofactor biosynthesis; (R)-pantothenate biosynthesis; (R)-pantothenate from (R)-pantoate and beta-alanine: step 1/1. Its function is as follows. Catalyzes the condensation of pantoate with beta-alanine in an ATP-dependent reaction via a pantoyl-adenylate intermediate. This Escherichia coli O17:K52:H18 (strain UMN026 / ExPEC) protein is Pantothenate synthetase.